A 589-amino-acid chain; its full sequence is Aspartate--tRNA ligase (589 aa).

E176 is an L-aspartate binding site. The tract at residues 200 to 203 (QLFK) is aspartate. R222 contributes to the L-aspartate binding site. ATP is bound by residues 222–224 (RDE) and Q231. Position 449 (H449) interacts with L-aspartate. Residue E483 participates in ATP binding. Position 490 (R490) interacts with L-aspartate. Residue 535–538 (GLDR) coordinates ATP.

The protein belongs to the class-II aminoacyl-tRNA synthetase family. Type 1 subfamily. Homodimer.

The protein localises to the cytoplasm. It carries out the reaction tRNA(Asp) + L-aspartate + ATP = L-aspartyl-tRNA(Asp) + AMP + diphosphate. Catalyzes the attachment of L-aspartate to tRNA(Asp) in a two-step reaction: L-aspartate is first activated by ATP to form Asp-AMP and then transferred to the acceptor end of tRNA(Asp). The sequence is that of Aspartate--tRNA ligase from Enterococcus faecalis (strain ATCC 700802 / V583).